A 419-amino-acid polypeptide reads, in one-letter code: MGLRHSSRCLLLRRKMAEAESTEQQQQKHKQPQHQQQQSISSIPSSQSLQPSPLPKPVTSVHHVPPHPPHTPHVSALSACPGRGKMAKLLNPEEMTSRDYYFDSYAHFGIHEEMLKDEVRTLTYRNSMYHNKHIFKDKIVLDVGSGTGILSMFAAKAGAKHVYGIECSSISEYSEKIIKSNHLDSVITILKGKVEETELPVDQVDIIISEWMGYCLFYESMLNTVIYARDKWLKPGGFMFPDRATLYVVAIEDRQYKDFKIHWWENVYGFDMTCIRNVAMMEPLVDIVDPKQVVTNSCLVKEVDIYTVKTEDLSFTSAFCLQIQRNDYVHALVTYFNIEFTKCHKKTGFSTAPDAPSTHWKQTVFYLEDYLTVRRGEEILGSITVRPNENNERDLDFTFELDFKGQLCDAAISHDYKMR.

Residues 1-14 (MGLRHSSRCLLLRR) show a composition bias toward basic residues. Residues 1-79 (MGLRHSSRCL…HTPHVSALSA (79 aa)) are disordered. Gly-2 is lipidated: N-myristoyl glycine. The segment covering 33–63 (QHQQQQSISSIPSSQSLQPSPLPKPVTSVHH) has biased composition (low complexity). Arg-83 carries the post-translational modification Omega-N-methylarginine. Arg-98 carries the asymmetric dimethylarginine modification. The SAM-dependent MTase PRMT-type domain occupies 98–402 (RDYYFDSYAH…RDLDFTFELD (305 aa)). S-adenosyl-L-methionine contacts are provided by residues His-111, Arg-120, Gly-144, 144–147 (GSGT), Glu-166, and Glu-195. Residues Glu-210 and Glu-219 contribute to the active site.

It belongs to the class I-like SAM-binding methyltransferase superfamily. Protein arginine N-methyltransferase family. PRMT8 subfamily. Homodimer. Tetramer; individual homodimers associates to form a homotetramer. Homooctamer; individual homodimers associates to form a homooctamer and homooligomerization is required for proper localization to the cell membrane.

It localises to the cell membrane. It catalyses the reaction L-arginyl-[protein] + S-adenosyl-L-methionine = N(omega)-methyl-L-arginyl-[protein] + S-adenosyl-L-homocysteine + H(+). It carries out the reaction L-arginyl-[protein] + 2 S-adenosyl-L-methionine = N(omega),N(omega)-dimethyl-L-arginyl-[protein] + 2 S-adenosyl-L-homocysteine + 2 H(+). S-adenosyl-L-methionine-dependent and membrane-associated arginine methyltransferase that can both catalyze the formation of omega-N monomethylarginine (MMA) and asymmetrical dimethylarginine (aDMA). This Danio rerio (Zebrafish) protein is Protein arginine N-methyltransferase 8-B (prmt8b).